Consider the following 281-residue polypeptide: Undecaprenyl-diphosphatase 1 (281 aa).

6 helical membrane-spanning segments follow: residues 95-115, 119-139, 152-172, 195-215, 227-247, and 256-276; these read WMVIAGTIPVGLAGVLLKDLI, FRNLWITATVLILFSLVFILA, LTMKDAVLMGLWQCLALIPGV, FSFLLAIPAVLASGLFSLPDA, LQLLVGSGIGFVVGYISIAWL, and FAWFAAYRIPLGLLVMALLGT.

It belongs to the UppP family.

Its subcellular location is the cell membrane. It catalyses the reaction di-trans,octa-cis-undecaprenyl diphosphate + H2O = di-trans,octa-cis-undecaprenyl phosphate + phosphate + H(+). In terms of biological role, catalyzes the dephosphorylation of undecaprenyl diphosphate (UPP). Confers resistance to bacitracin. This chain is Undecaprenyl-diphosphatase 1, found in Corynebacterium jeikeium (strain K411).